The following is a 201-amino-acid chain: Myelomonocytic growth factor (201 aa).

The N-terminal stretch at 1–23 (MCCLTPVLALALVLGAPWQALHG) is a signal peptide. 2 disulfides stabilise this stretch: Cys-61-Cys-67 and Cys-89-Cys-99. Residues Asn-123 and Asn-137 are each glycosylated (N-linked (GlcNAc...) asparagine).

This sequence belongs to the IL-6 superfamily.

It is found in the secreted. In terms of biological role, hematopoietic growth factor that stimulates the proliferation and colony formation of normal and transformed avian cells of the myeloid lineage. This chain is Myelomonocytic growth factor, found in Gallus gallus (Chicken).